The primary structure comprises 420 residues: Histidine--tRNA ligase (420 aa).

Belongs to the class-II aminoacyl-tRNA synthetase family. As to quaternary structure, homodimer.

It localises to the cytoplasm. The enzyme catalyses tRNA(His) + L-histidine + ATP = L-histidyl-tRNA(His) + AMP + diphosphate + H(+). This Thermotoga sp. (strain RQ2) protein is Histidine--tRNA ligase.